We begin with the raw amino-acid sequence, 246 residues long: Large ribosomal subunit protein uL2 (246 aa).

The interval 196–226 is disordered; the sequence is MSPYAHPHGGGSHQKGGTPVPKTAPPGQKVG.

It belongs to the universal ribosomal protein uL2 family. In terms of assembly, part of the 50S ribosomal subunit. Forms a bridge to the 30S subunit in the 70S ribosome.

One of the primary rRNA binding proteins. Required for association of the 30S and 50S subunits to form the 70S ribosome, for tRNA binding and peptide bond formation. It has been suggested to have peptidyltransferase activity; this is somewhat controversial. Makes several contacts with the 16S rRNA in the 70S ribosome. The protein is Large ribosomal subunit protein uL2 of Pyrobaculum arsenaticum (strain DSM 13514 / JCM 11321 / PZ6).